The following is a 729-amino-acid chain: Disintegrin and metalloproteinase domain-containing protein 21 (729 aa).

The first 39 residues, 1-39 (MECFIMLGADARTLMRVTLLLLWLKALPSLIDLSQTGST), serve as a signal peptide directing secretion. A propeptide spanning residues 40–209 (QYLSSPEVVI…MKQNYGKLWP (170 aa)) is cleaved from the precursor. N-linked (GlcNAc...) asparagine glycosylation occurs at N169. The Cysteine switch signature appears at 176-183 (MLCSLTEK). C178 is a Zn(2+) binding site. Residues 210 to 685 (HMWFLELAVV…DSGPTSQKRR (476 aa)) lie on the Extracellular side of the membrane. In terms of domain architecture, Peptidase M12B spans 212–402 (WFLELAVVVD…NQGTCLYNHP (191 aa)). The N-linked (GlcNAc...) asparagine glycan is linked to N231. 3 disulfides stabilise this stretch: C320/C397, C360/C382, and C362/C367. H345 lines the Zn(2+) pocket. E346 is an active-site residue. Zn(2+)-binding residues include H349 and H355. 3 N-linked (GlcNAc...) asparagine glycosylation sites follow: N381, N441, and N482. Residues 410-496 (VKRCGNGMVE…QCPEDGYVQD (87 aa)) enclose the Disintegrin domain. 4 disulfides stabilise this stretch: C468/C488, C638/C649, C643/C655, and C657/C666. One can recognise an EGF-like domain in the interval 638–667 (CLPETCNRKGVCNNKHHCHCDYGWSPPFCL). A helical membrane pass occupies residues 686 to 706 (VIITVLSITVPVLSILICLLI). Residues 707–729 (AGLYRIYCKIPSGPKETKASSPG) lie on the Cytoplasmic side of the membrane.

The cofactor is Zn(2+). Post-translationally, has no obvious cleavage site for furin endopeptidase, suggesting that the proteolytic processing is regulated. Highly expressed in Leydig cells. Expressed also in cauda epididymidis, vas deferens, convoluted tubules, kidney and the parietal cells of stomach. Not detected on developing spermatocytes or mature sperm.

The protein localises to the membrane. Functionally, may be involved in sperm maturation and/or fertilization. May also be involved in epithelia functions associated with establishing and maintaining gradients of ions or nutrients. The protein is Disintegrin and metalloproteinase domain-containing protein 21 (Adam21) of Mus musculus (Mouse).